Consider the following 578-residue polypeptide: MIKRYLQFVKPYKYRIFATIIVGIIKFGIPMLIPLLIKYAIDGVINNHALTTDEKVHHLTIAIGIALFIFVIVRPPIEFIRQYLAQWTSNKILYDIRKKLYNHLQALSARFYANNQVGQVISRVINDVEQTKDFILTGLMNIWLDCITIIIALSIMFFLDVKLTLAALFIFPFYILTVYVFFGRLRKLTRERSQALAEVQGFLHERVQGISVVKSFAIEDNEAKNFDKKNANFLTRALKHTRWNAYSFATINTVTDIGPIIVIGVGAYLAISGSITVGTLAAFVGYLELLFGPLRRLVASFTTLTQSFASMDRVFQLIDEDYDIKNGVGAQPIEIKQGRIDIYHVNFQYNDNEAPILKDINLSIEKGETVAFVGMSGGGKSTLINLIPRFYDVTSGQILIDGHNIKDFLTGSLRNQIGLVQQDNILFSDTVKENILLGRPTATDEEVVEVAKVANAHDFIMNLPQGYDTEVGERGVKLSGGQKQRLSIARIFLNNPPILILDEATSALDLESESIIQEALDVLSKDRTTLIVAHRLSTITHADKIVVIENGHIVETGTHRELIAKQGAYEHLYSIQNL.

Over methionine 1–arginine 15 the chain is Cytoplasmic. The chain crosses the membrane as a helical span at residues isoleucine 16 to leucine 36. The ABC transmembrane type-1 domain occupies isoleucine 16–glutamine 306. Residues isoleucine 37–leucine 59 lie on the Extracellular side of the membrane. A helical transmembrane segment spans residues threonine 60–isoleucine 80. The Cytoplasmic segment spans residues arginine 81–glycine 138. A helical membrane pass occupies residues leucine 139–leucine 159. At aspartate 160 to lysine 162 the chain is on the extracellular side. The chain crosses the membrane as a helical span at residues leucine 163 to glycine 183. Residues arginine 184–arginine 242 are Cytoplasmic-facing. A helical membrane pass occupies residues tryptophan 243 to valine 262. At isoleucine 263–alanine 267 the chain is on the extracellular side. Residues tyrosine 268–leucine 287 traverse the membrane as a helical segment. Over glutamate 288–leucine 578 the chain is Cytoplasmic. Residues isoleucine 340–isoleucine 575 form the ABC transporter domain. Glycine 374–serine 381 provides a ligand contact to ATP.

The protein belongs to the ABC transporter superfamily. As to quaternary structure, homodimer.

It localises to the cell membrane. Its function is as follows. May be involved in multidrug export. Transmembrane domains (TMD) form a pore in the cell membrane and the ATP-binding domain (NBD) is responsible for energy generation. The chain is Putative multidrug export ATP-binding/permease protein SAB1799c from Staphylococcus aureus (strain bovine RF122 / ET3-1).